We begin with the raw amino-acid sequence, 456 residues long: 3-isopropylmalate dehydratase large subunit (456 aa).

[4Fe-4S] cluster contacts are provided by C336, C396, and C399.

Belongs to the aconitase/IPM isomerase family. LeuC type 1 subfamily. Heterodimer of LeuC and LeuD. It depends on [4Fe-4S] cluster as a cofactor.

The enzyme catalyses (2R,3S)-3-isopropylmalate = (2S)-2-isopropylmalate. It participates in amino-acid biosynthesis; L-leucine biosynthesis; L-leucine from 3-methyl-2-oxobutanoate: step 2/4. Its function is as follows. Catalyzes the isomerization between 2-isopropylmalate and 3-isopropylmalate, via the formation of 2-isopropylmaleate. The sequence is that of 3-isopropylmalate dehydratase large subunit from Staphylococcus epidermidis (strain ATCC 35984 / DSM 28319 / BCRC 17069 / CCUG 31568 / BM 3577 / RP62A).